A 319-amino-acid polypeptide reads, in one-letter code: Lipoyl synthase (319 aa).

A disordered region spans residues 1–32; that stretch reads MVVLVDTVSSTPVRPRHPEKAARPDSLSPKKP. Positions 16-32 are enriched in basic and acidic residues; that stretch reads RHPEKAARPDSLSPKKP. Positions 61, 66, 72, 87, 91, 94, and 300 each coordinate [4Fe-4S] cluster. The region spanning 73 to 289 is the Radical SAM core domain; sequence WDKKHATFMI…GKTAYAKGFL (217 aa).

This sequence belongs to the radical SAM superfamily. Lipoyl synthase family. The cofactor is [4Fe-4S] cluster.

The protein localises to the cytoplasm. The enzyme catalyses [[Fe-S] cluster scaffold protein carrying a second [4Fe-4S](2+) cluster] + N(6)-octanoyl-L-lysyl-[protein] + 2 oxidized [2Fe-2S]-[ferredoxin] + 2 S-adenosyl-L-methionine + 4 H(+) = [[Fe-S] cluster scaffold protein] + N(6)-[(R)-dihydrolipoyl]-L-lysyl-[protein] + 4 Fe(3+) + 2 hydrogen sulfide + 2 5'-deoxyadenosine + 2 L-methionine + 2 reduced [2Fe-2S]-[ferredoxin]. Its pathway is protein modification; protein lipoylation via endogenous pathway; protein N(6)-(lipoyl)lysine from octanoyl-[acyl-carrier-protein]: step 2/2. Catalyzes the radical-mediated insertion of two sulfur atoms into the C-6 and C-8 positions of the octanoyl moiety bound to the lipoyl domains of lipoate-dependent enzymes, thereby converting the octanoylated domains into lipoylated derivatives. The chain is Lipoyl synthase from Rhodopseudomonas palustris (strain BisB5).